Consider the following 463-residue polypeptide: Asparagine--tRNA ligase (463 aa).

Belongs to the class-II aminoacyl-tRNA synthetase family. As to quaternary structure, homodimer.

The protein resides in the cytoplasm. It carries out the reaction tRNA(Asn) + L-asparagine + ATP = L-asparaginyl-tRNA(Asn) + AMP + diphosphate + H(+). The sequence is that of Asparagine--tRNA ligase from Clostridium acetobutylicum (strain ATCC 824 / DSM 792 / JCM 1419 / IAM 19013 / LMG 5710 / NBRC 13948 / NRRL B-527 / VKM B-1787 / 2291 / W).